Consider the following 129-residue polypeptide: Glycine cleavage system H protein (129 aa).

The Lipoyl-binding domain occupies 24–106 (TYTVGITEHA…YAGGWIFKIK (83 aa)). At lysine 65 the chain carries N6-lipoyllysine.

This sequence belongs to the GcvH family. The glycine cleavage system is composed of four proteins: P, T, L and H. (R)-lipoate is required as a cofactor.

In terms of biological role, the glycine cleavage system catalyzes the degradation of glycine. The H protein shuttles the methylamine group of glycine from the P protein to the T protein. The chain is Glycine cleavage system H protein from Escherichia coli O45:K1 (strain S88 / ExPEC).